We begin with the raw amino-acid sequence, 318 residues long: Acetyl-coenzyme A carboxylase carboxyl transferase subunit alpha (318 aa).

The CoA carboxyltransferase C-terminal domain maps to 41-295 (RLTTKSQELT…KRQLIADLGS (255 aa)).

It belongs to the AccA family. In terms of assembly, acetyl-CoA carboxylase is a heterohexamer composed of biotin carboxyl carrier protein (AccB), biotin carboxylase (AccC) and two subunits each of ACCase subunit alpha (AccA) and ACCase subunit beta (AccD).

The protein localises to the cytoplasm. It catalyses the reaction N(6)-carboxybiotinyl-L-lysyl-[protein] + acetyl-CoA = N(6)-biotinyl-L-lysyl-[protein] + malonyl-CoA. The protein operates within lipid metabolism; malonyl-CoA biosynthesis; malonyl-CoA from acetyl-CoA: step 1/1. Functionally, component of the acetyl coenzyme A carboxylase (ACC) complex. First, biotin carboxylase catalyzes the carboxylation of biotin on its carrier protein (BCCP) and then the CO(2) group is transferred by the carboxyltransferase to acetyl-CoA to form malonyl-CoA. The protein is Acetyl-coenzyme A carboxylase carboxyl transferase subunit alpha of Idiomarina loihiensis (strain ATCC BAA-735 / DSM 15497 / L2-TR).